Consider the following 391-residue polypeptide: MQKLINSVQNYAWGSKTALTELYGIANPQQQPMAELWMGAHPKSSSRITTANGETVSLRDAIEKNKTAMLGEAVANRFGELPFLFKVLCAAQPLSIQVHPNKRNSEIGFAKENAAGIPMDAAERNYKDPNHKPELVFALTPFLAMNAFREFSDIVSLLQPVAGAHSAIAHFLQVPNAERLSQLFASLLNMQGEEKSRALAVLKAALNSQQGEPWQTIRVISEYYPDDSGLFSPLLLNVVKLNPGEAMFLFAETPHAYLQGVALEVMANSDNVLRAGLTPKYIDIPELVANVKFEPKPAGELLTAPVKSGAELDFPIPVDDFAFSLHDLALQETSIGQHSAAILFCVEGEAVLRKDEQRLVLKPGESAFIGADESPVNASGTGRLARVYNKL.

Gln97, His99, Glu134, and His255 together coordinate Zn(2+). The active site involves Arg274.

Belongs to the mannose-6-phosphate isomerase type 1 family. The cofactor is Zn(2+).

Its subcellular location is the cytoplasm. It catalyses the reaction D-mannose 6-phosphate = D-fructose 6-phosphate. Involved in the conversion of glucose to GDP-L-fucose, which can be converted to L-fucose, a capsular polysaccharide. The protein is Mannose-6-phosphate isomerase (manA) of Salmonella typhimurium (strain LT2 / SGSC1412 / ATCC 700720).